The following is a 344-amino-acid chain: Serpentine receptor class H-72 (344 aa).

Transmembrane regions (helical) follow at residues 30–50 (GLAFCCQIIGFISLPMHFFTG), 66–86 (LSLVNLNIWYIISQVIVSFFI), 110–132 (TVVQICILYTINDAVHVSITLLF), 155–175 (WLAGNFFGTVFITSPVFFNLA), 221–241 (SIYMLQIIFFTSCCIYYLVIV), 259–279 (YGLIIQTLIPAAFTLIPSVLI), and 292–312 (LVSISYAVHIVVGSLAILLVH).

This sequence belongs to the nematode receptor-like protein srh family.

The protein resides in the membrane. This Caenorhabditis elegans protein is Serpentine receptor class H-72 (srh-72).